The chain runs to 232 residues: Phosphatidylserine decarboxylase proenzyme (232 aa).

Catalysis depends on Ser-190, which acts as the Schiff-base intermediate with substrate; via pyruvic acid. At Ser-190 the chain carries Pyruvic acid (Ser); by autocatalysis.

The protein belongs to the phosphatidylserine decarboxylase family. PSD-A subfamily. As to quaternary structure, heterodimer of a large membrane-associated beta subunit and a small pyruvoyl-containing alpha subunit. The cofactor is pyruvate. In terms of processing, is synthesized initially as an inactive proenzyme. Formation of the active enzyme involves a self-maturation process in which the active site pyruvoyl group is generated from an internal serine residue via an autocatalytic post-translational modification. Two non-identical subunits are generated from the proenzyme in this reaction, and the pyruvate is formed at the N-terminus of the alpha chain, which is derived from the carboxyl end of the proenzyme. The post-translation cleavage follows an unusual pathway, termed non-hydrolytic serinolysis, in which the side chain hydroxyl group of the serine supplies its oxygen atom to form the C-terminus of the beta chain, while the remainder of the serine residue undergoes an oxidative deamination to produce ammonia and the pyruvoyl prosthetic group on the alpha chain.

The protein resides in the cell membrane. The enzyme catalyses a 1,2-diacyl-sn-glycero-3-phospho-L-serine + H(+) = a 1,2-diacyl-sn-glycero-3-phosphoethanolamine + CO2. It participates in phospholipid metabolism; phosphatidylethanolamine biosynthesis; phosphatidylethanolamine from CDP-diacylglycerol: step 2/2. Its function is as follows. Catalyzes the formation of phosphatidylethanolamine (PtdEtn) from phosphatidylserine (PtdSer). In Rhodopseudomonas palustris (strain TIE-1), this protein is Phosphatidylserine decarboxylase proenzyme.